A 483-amino-acid chain; its full sequence is M protein, serotype 6 (483 aa).

A signal peptide spans 1–42 (MAKNNTNRHYSLRKLKKGTASVAVALSVIGAGLVVNTNEVSA). Residues 54 to 171 (DKARELLNKY…IGTLKKTLDE (118 aa)) adopt a coiled-coil conformation. 8 tandem repeats follow at residues 69-75 (MLQANND), 76-82 (KLTTENN), 83-89 (NLTDQNK), 90-96 (NLTTENK), 97-103 (NLTDQNK), 104-110 (NLTTENK), 111-117 (NLTDQNK), and 118-124 (NLTTENK). The 10 X 7 AA approximate tandem repeats of [KMNR]-L-[TQ]-[TDA]-[ENQ]-N-[NDK] stretch occupies residues 69–138 (MLQANNDKLT…EENRLTTENK (70 aa)). Over residues 74–87 (NDKLTTENNNLTDQ) the composition is skewed to polar residues. The interval 74–157 (NDKLTTENNN…EEEAANKERE (84 aa)) is disordered. Residues 88–113 (NKNLTTENKNLTDQNKNLTTENKNLT) are compositionally biased toward low complexity. Basic and acidic residues-rich tracts occupy residues 122–135 (ENKELKAEENRLTT) and 143–157 (KLSEAEEEAANKERE). The stretch at 125–131 (ELKAEEN) is one 9-1; approximate repeat. 5 repeat units span residues 132–138 (RLTTENK), 157–181 (ENKEAIGTLKKTLDETVKDKIAKEQ), 182–206 (ESKETIGTLKKTLDETVKDKIAKEQ), 207–231 (ESKETIGTLKKTLDETVKDKIAKEQ), and 232–256 (ESKETIGTLKKILDETVKDKIAREQ). Residues 157–269 (ENKEAIGTLK…QDIGALKQEL (113 aa)) are 4.5 X 25 AA tandem repeats of E-[NS]-K-E-[TA]-I-G-T-L-K-K-[TI]-L-D-E-T-V-K-D-K-I-A-[KR]-E-Q. Disordered regions lie at residues 255–298 (EQKS…EAKK) and 314–345 (VKEEKQISDASRQGLRRDLDASREAKKQVEKA). The 5-2; truncated repeat unit spans residues 257–269 (KSKQDIGALKQEL). Basic and acidic residues-rich tracts occupy residues 268-298 (ELAKKDEGNKVSEASRKGLRRDLDASREAKK) and 328-345 (LRRDLDASREAKKQVEKA). 2 C repeats span residues 270 to 304 (AKKDEGNKVSEASRKGLRRDLDASREAKKQVEKDL) and 312 to 346 (DKVKEEKQISDASRQGLRRDLDASREAKKQVEKAL). The segment at 279-347 (SEASRKGLRR…AKKQVEKALE (69 aa)) is binding to CD46. A two directly repeated 27 amino acid blocks separated by 15 amino acids region spans residues 279 to 347 (SEASRKGLRR…AKKQVEKALE (69 aa)). Residues 280–408 (EASRKGLRRD…LAKLRAGKAS (129 aa)) adopt a coiled-coil conformation. The interval 348 to 411 (EANSKLAALE…LRAGKASDSQ (64 aa)) is hydrophilic. 4 D repeats span residues 379 to 384 (AKLEAE), 385 to 390 (AKALKE), 393 to 398 (AKQAEE), and 400 to 405 (AKLRAG). Residues 400–455 (AKLRAGKASDSQTPDAKPGNKVVPGKGQAPQAGTKPNQNKAPMKETKRQLPSTGET) are disordered. An LPXTG sorting signal motif is present at residues 449-453 (LPSTG). The residue at position 452 (threonine 452) is a Pentaglycyl murein peptidoglycan amidated threonine. A propeptide spans 453–483 (GETANPFFTAAALTVMATAGVAAVVKRKEEN) (removed by sortase).

The protein belongs to the M protein family.

It is found in the secreted. The protein resides in the cell wall. Mediates the attachment of S.pyogenes to skin epithelial cells through the binding of the human membrane cofactor protein CD46. Also binds to the factor H and factor H-like protein 1. These interactions could contribute to the fact that the M6 protein protects the bacterium from the phagocytosis by regulating the complement activation on the bacterial surface. This chain is M protein, serotype 6 (emm6), found in Streptococcus pyogenes.